The sequence spans 413 residues: Palmitoyltransferase ZDHHC6 (413 aa).

Over 1–24 (MGTFCSVVKFENLQELKRLCHWGP) the chain is Cytoplasmic. The helical transmembrane segment at 25-45 (IIALGVIAICSAMAMIDSVLW) threads the bilayer. Topologically, residues 46 to 57 (YWPLHTTGGSVN) are lumenal. The helical transmembrane segment at 58-78 (FIMLINWTVMILYNYFNAMFV) threads the bilayer. Residues 79-143 (GPGFVPLGWK…NCCGYQNHAS (65 aa)) lie on the Cytoplasmic side of the membrane. Residues 99 to 149 (QYCKVCQAYKAPRSHHCRKCNRCVMKMDHHCPWINNCCGYQNHASFTLFLL) form the DHHC domain. Cys-129 (S-palmitoyl cysteine intermediate) is an active-site residue. The helical transmembrane segment at 144–164 (FTLFLLLAPLGCIHAAFIFVM) threads the bilayer. Residues 165–194 (TMYTQLYNRLSFGWNTVKIDMSAARRDPLP) lie on the Lumenal side of the membrane. A helical membrane pass occupies residues 195–215 (IIPFGLAAFAATLFALGLALG). Over 216 to 413 (TTIAVGMLFF…QAPEGEKKNR (198 aa)) the chain is Cytoplasmic. Residues 313–398 (VRSVRYKVIE…PRNCVEKCPC (86 aa)) enclose the SH3 domain. 3 S-palmitoyl cysteine lipidation sites follow: Cys-328, Cys-329, and Cys-343. The Di-lysine motif motif lies at 410–413 (KKNR).

Belongs to the DHHC palmitoyltransferase family. In terms of assembly, homooligomerizes. Interacts with SELENOK. Palmitoylated at 3 different sites by ZDHHC16. The combination of the different palmitoylation events strongly affects the quaternary assembly of ZDHHC6, its localization, stability and function. Palmitoylation at Cys-328 accelerates the turnover of ZDHHC6. Depalmitoylated by LYPLA2.

Its subcellular location is the endoplasmic reticulum membrane. It carries out the reaction L-cysteinyl-[protein] + hexadecanoyl-CoA = S-hexadecanoyl-L-cysteinyl-[protein] + CoA. The enzyme catalyses L-cysteinyl-[protein] + octadecanoyl-CoA = S-octadecanoyl-L-cysteinyl-[protein] + CoA. Functionally, endoplasmic reticulum palmitoyl acyltransferase that mediates palmitoylation of proteins such as AMFR, CALX, ITPR1 and TFRC. Palmitoylates calnexin (CALX), which is required for its association with the ribosome-translocon complex and efficient folding of glycosylated proteins. Mediates palmitoylation of AMFR, promoting AMFR distribution to the peripheral endoplasmic reticulum. Together with SELENOK, palmitoylates ITPR1 in immune cells, leading to regulate ITPR1 stability and function. Stearoyltransferase that mediates stearoylation of TFRC to inhibit TFRC-mediated activation of the JNK pathway and mitochondrial fragmentation. The sequence is that of Palmitoyltransferase ZDHHC6 from Bos taurus (Bovine).